A 95-amino-acid chain; its full sequence is Protein TusB (95 aa).

It belongs to the DsrH/TusB family. Heterohexamer, formed by a dimer of trimers. The hexameric TusBCD complex contains 2 copies each of TusB, TusC and TusD. The TusBCD complex interacts with TusE.

The protein localises to the cytoplasm. In terms of biological role, part of a sulfur-relay system required for 2-thiolation of 5-methylaminomethyl-2-thiouridine (mnm(5)s(2)U) at tRNA wobble positions. The chain is Protein TusB from Shigella sonnei (strain Ss046).